Consider the following 423-residue polypeptide: COP9 signalosome complex subunit 3 (423 aa).

The PCI domain maps to 197–365; that stretch reads NFERAMYFYE…GMVCFHDSPE (169 aa). Positions 401–410 are enriched in polar residues; the sequence is PQFVQKSMGS. The tract at residues 401–423 is disordered; the sequence is PQFVQKSMGSQEDDSGSKPSSYS.

This sequence belongs to the CSN3 family. Component of the CSN complex, probably composed of cops1, cops2, cops3, cops4, cops5, cops6, cops7, cops8 and cops9.

It is found in the cytoplasm. It localises to the nucleus. Functionally, component of the COP9 signalosome complex (CSN), a complex involved in various cellular and developmental processes. The CSN complex is an essential regulator of the ubiquitin (Ubl) conjugation pathway by mediating the deneddylation of the cullin subunits of E3 ligase complexes, leading to modify the Ubl ligase activity. The protein is COP9 signalosome complex subunit 3 (cops3) of Xenopus laevis (African clawed frog).